The primary structure comprises 314 residues: Carbamate kinase (314 aa).

The protein belongs to the carbamate kinase family. As to quaternary structure, homodimer.

It is found in the cytoplasm. The enzyme catalyses hydrogencarbonate + NH4(+) + ATP = carbamoyl phosphate + ADP + H2O + H(+). It functions in the pathway metabolic intermediate metabolism; carbamoyl phosphate degradation; CO(2) and NH(3) from carbamoyl phosphate: step 1/1. This is Carbamate kinase (arcC) from Clostridium perfringens (strain 13 / Type A).